The following is a 284-amino-acid chain: 4-diphosphocytidyl-2-C-methyl-D-erythritol kinase (284 aa).

The active site involves K14. An ATP-binding site is contributed by 98 to 108; sequence PMGGGLGGGSS. D140 is an active-site residue.

The protein belongs to the GHMP kinase family. IspE subfamily.

The catalysed reaction is 4-CDP-2-C-methyl-D-erythritol + ATP = 4-CDP-2-C-methyl-D-erythritol 2-phosphate + ADP + H(+). Its pathway is isoprenoid biosynthesis; isopentenyl diphosphate biosynthesis via DXP pathway; isopentenyl diphosphate from 1-deoxy-D-xylulose 5-phosphate: step 3/6. Its function is as follows. Catalyzes the phosphorylation of the position 2 hydroxy group of 4-diphosphocytidyl-2C-methyl-D-erythritol. The chain is 4-diphosphocytidyl-2-C-methyl-D-erythritol kinase from Shewanella sp. (strain ANA-3).